Here is a 270-residue protein sequence, read N- to C-terminus: Regulatory protein RecX (270 aa).

This sequence belongs to the RecX family.

It localises to the cytoplasm. Its function is as follows. Modulates RecA activity. The protein is Regulatory protein RecX of Bacillus mycoides (strain KBAB4) (Bacillus weihenstephanensis).